Reading from the N-terminus, the 226-residue chain is Ribonuclease 3 (226 aa).

Residues 6 to 128 (INRLQRKLGY…LIGGIFLDSD (123 aa)) enclose the RNase III domain. Mg(2+) is bound at residue Glu41. Asp45 is a catalytic residue. Residues Asp114 and Glu117 each coordinate Mg(2+). Residue Glu117 is part of the active site. In terms of domain architecture, DRBM spans 155-225 (DPKTRLQEFL…AEQALKKLEL (71 aa)).

Belongs to the ribonuclease III family. As to quaternary structure, homodimer. Mg(2+) serves as cofactor.

The protein resides in the cytoplasm. The catalysed reaction is Endonucleolytic cleavage to 5'-phosphomonoester.. Digests double-stranded RNA. Involved in the processing of primary rRNA transcript to yield the immediate precursors to the large and small rRNAs (23S and 16S). Processes some mRNAs, and tRNAs when they are encoded in the rRNA operon. Processes pre-crRNA and tracrRNA of type II CRISPR loci if present in the organism. This chain is Ribonuclease 3, found in Pectobacterium carotovorum subsp. carotovorum (strain PC1).